A 223-amino-acid polypeptide reads, in one-letter code: Ribose-5-phosphate isomerase A (223 aa).

Substrate-binding positions include 26 to 29 (TGST), 82 to 85 (DGAD), and 95 to 98 (KGGG). Glu104 acts as the Proton acceptor in catalysis. Residue Lys122 participates in substrate binding.

It belongs to the ribose 5-phosphate isomerase family. In terms of assembly, homodimer.

The enzyme catalyses aldehydo-D-ribose 5-phosphate = D-ribulose 5-phosphate. It participates in carbohydrate degradation; pentose phosphate pathway; D-ribose 5-phosphate from D-ribulose 5-phosphate (non-oxidative stage): step 1/1. In terms of biological role, catalyzes the reversible conversion of ribose-5-phosphate to ribulose 5-phosphate. This Streptococcus agalactiae serotype V (strain ATCC BAA-611 / 2603 V/R) protein is Ribose-5-phosphate isomerase A.